The chain runs to 739 residues: Sulfate transporter (739 aa).

Basic and acidic residues-rich tracts occupy residues 1–17 (MSSENKEQHDLSPRDLP) and 31–46 (TQRRSGTDLRQSETGH). The disordered stretch occupies residues 1–47 (MSSENKEQHDLSPRDLPEEAFGFPSELPLETQRRSGTDLRQSETGHG). At S12 the chain carries Phosphoserine. The next 2 helical transmembrane spans lie at 112-132 (VMSGLIVGILLVPQSIAYSLL) and 137-157 (PIYGLYTSFFASIIYFLFGTS). N-linked (GlcNAc...) asparagine glycosylation occurs at N205. Transmembrane regions (helical) follow at residues 227–247 (FMAGVYQVAMGFFQVGFVSVY) and 255–275 (GFVTGASFTILTSQAKYLLGL). Residue N357 is glycosylated (N-linked (GlcNAc...) asparagine). 4 consecutive transmembrane segments (helical) span residues 378–398 (LIPNVAVDAIAISIIGFAITV), 420–440 (AIGFCNIIPSFFHCITTSAAL), 455–475 (LSAIVTALVLLLVLLVIAPLF), and 524–544 (LLSTEIGLLVGVCFSMFCVIL). The STAS domain occupies 568–719 (TYKNLRSKSG…YSLSEAVAFA (152 aa)).

The protein belongs to the SLC26A/SulP transporter (TC 2.A.53) family. N-glycosylated. In terms of tissue distribution, distributed mainly in the thymus, testis and osteoblastic cells. Highly expressed in the bone, cartilage, kidney and colon.

Its subcellular location is the cell membrane. It localises to the apical cell membrane. It carries out the reaction oxalate(in) + sulfate(out) = oxalate(out) + sulfate(in). The enzyme catalyses sulfate(out) + 2 chloride(in) = sulfate(in) + 2 chloride(out). It catalyses the reaction oxalate(out) + 2 chloride(in) = oxalate(in) + 2 chloride(out). The catalysed reaction is bromide(in) + chloride(out) = bromide(out) + chloride(in). It carries out the reaction nitrate(in) + chloride(out) = nitrate(out) + chloride(in). The enzyme catalyses iodide(in) + chloride(out) = iodide(out) + chloride(in). Its function is as follows. Sulfate transporter which mediates sulfate uptake into chondrocytes in order to maintain adequate sulfation of proteoglycans which is needed for cartilage development. Mediates electroneutral anion exchange of sulfate ions for oxalate ions, sulfate and oxalate ions for chloride and/or hydroxyl ions and chloride ions for bromide, iodide and nitrate ions. The coupling of sulfate transport to both hydroxyl and chloride ions likely serves to ensure transport at both acidic pH when most sulfate uptake is mediated by sulfate-hydroxide exchange and alkaline pH when most sulfate uptake is mediated by sulfate-chloride exchange. Essential for chondrocyte proliferation, differentiation and cell size expansion. The sequence is that of Sulfate transporter (Slc26a2) from Mus musculus (Mouse).